We begin with the raw amino-acid sequence, 351 residues long: Nicotinate-nucleotide--dimethylbenzimidazole phosphoribosyltransferase (351 aa).

Residue E315 is the Proton acceptor of the active site.

This sequence belongs to the CobT family.

It catalyses the reaction 5,6-dimethylbenzimidazole + nicotinate beta-D-ribonucleotide = alpha-ribazole 5'-phosphate + nicotinate + H(+). Its pathway is nucleoside biosynthesis; alpha-ribazole biosynthesis; alpha-ribazole from 5,6-dimethylbenzimidazole: step 1/2. Functionally, catalyzes the synthesis of alpha-ribazole-5'-phosphate from nicotinate mononucleotide (NAMN) and 5,6-dimethylbenzimidazole (DMB). This is Nicotinate-nucleotide--dimethylbenzimidazole phosphoribosyltransferase from Acetivibrio thermocellus (strain ATCC 27405 / DSM 1237 / JCM 9322 / NBRC 103400 / NCIMB 10682 / NRRL B-4536 / VPI 7372) (Clostridium thermocellum).